The chain runs to 79 residues: RNA-binding protein Hfq (79 aa).

One can recognise a Sm domain in the interval 10–70 (DVFLNTVRKQ…ISTIMPGQPV (61 aa)).

The protein belongs to the Hfq family. In terms of assembly, homohexamer.

Functionally, RNA chaperone that binds small regulatory RNA (sRNAs) and mRNAs to facilitate mRNA translational regulation in response to envelope stress, environmental stress and changes in metabolite concentrations. Also binds with high specificity to tRNAs. The chain is RNA-binding protein Hfq from Bartonella quintana (strain Toulouse) (Rochalimaea quintana).